The primary structure comprises 398 residues: Acetate kinase (398 aa).

Residue N7 participates in Mg(2+) binding. Residue K14 coordinates ATP. A substrate-binding site is contributed by R92. Residue D149 is the Proton donor/acceptor of the active site. ATP is bound by residues 208–212, 283–285, and 331–335; these read HLGNG, DCR, and GIGEN. E385 serves as a coordination point for Mg(2+).

The protein belongs to the acetokinase family. In terms of assembly, homodimer. Requires Mg(2+) as cofactor. The cofactor is Mn(2+).

The protein localises to the cytoplasm. It carries out the reaction acetate + ATP = acetyl phosphate + ADP. It participates in metabolic intermediate biosynthesis; acetyl-CoA biosynthesis; acetyl-CoA from acetate: step 1/2. Functionally, catalyzes the formation of acetyl phosphate from acetate and ATP. Can also catalyze the reverse reaction. This chain is Acetate kinase, found in Fusobacterium nucleatum subsp. nucleatum (strain ATCC 25586 / DSM 15643 / BCRC 10681 / CIP 101130 / JCM 8532 / KCTC 2640 / LMG 13131 / VPI 4355).